A 178-amino-acid chain; its full sequence is Large ribosomal subunit protein uL6 (178 aa).

This sequence belongs to the universal ribosomal protein uL6 family. Part of the 50S ribosomal subunit.

This protein binds to the 23S rRNA, and is important in its secondary structure. It is located near the subunit interface in the base of the L7/L12 stalk, and near the tRNA binding site of the peptidyltransferase center. The polypeptide is Large ribosomal subunit protein uL6 (Paenarthrobacter aurescens (strain TC1)).